The following is a 1046-amino-acid chain: MGETEQRPTAGSRLGAQENAGISTLEHGQKPPLTPPGKLISIKIQMLDDTQETFEVPQRAPGKVLHDAVCNHLNLVEGDYFGLEFPDHKKMMVWLDLLKPVMKQIRRPKHVVVKFVVKFFPPDHAQLQEELTRYLFALQVKQDLAQGRLTCNDTSTALLISHIVQSEIGDFDETIDREHLAKNKYIPQQEALEDKIMEFHRKHTGQTPAESDFQLLEIARRLEMYGIRLHPAKDREGTKINLAVANTGILVFQGHTKINAFNWAKVRKLSFKRKRFLIKLRPDVNSSFQDTLEFLMASRDFCKSFWKICVEHHAFFRLFEEPKPKPKPVLFSRGSSFRFSGRTQKQVLDYVKEGGHKKVQFERKHSKIRSIRSLTAQPSEQHAEVPKQSFQSSSFAYGDDSDAAAVQSCQQGKELKASTEDTGQHKSPSLKKSPKEGRKVDGAVVSAVEEEEEAATDRMQQNRPQSQQPSTAGSLTGSPHLSELSINSQGGPSVANMSLSPNLSPDAKQSSPLISPLLNDPSCIRTEEEEEVKKKRFPTEKAYFIAKEVATTERTYLKDLEVITSWFQSAVSKEDCMPETLKNLIFSNFEPLHKFHTGFLKEIEQRLALWEGRSNAHIKGGHQRIGDVMLKNIQGMKQLTIHLWKHNEILTELENGIKNSRKLETFCRDFELQKVCYLPLNTFLLRPLHRLMHYKQIMERLCKHYPPNHVDFRDSRAALAEITEMMAQLHGNMIKMENFQKLHELKKDLIGIDNLVIPGREFIRLGSLSKLSGKGLQQRMFFLFNDILLYTSRGLTASNQFKVHGHLPLYGMTIEDSEEEWGVPHCLTLRGQQQSIIVAASTRAEIDKWIEDIQMAIDLAEKSSDPVPELLASSPPDNKSPDETTVDQESEDDLSASRTSLERQSPHRGNTTVHVCWHRNTSVSMIDFSIAVENQLSGNLLRKFKNSNGWQKLWVVFTNFCMFFYKSHQDNHPLASLPLLGYSLTIPSESENIHKDYVFKLHFKSHVYYFRAESEYTFERWMEVIRSATSSALRTRALSHREPHTY.

In terms of domain architecture, FERM spans 40–320 (ISIKIQMLDD…EHHAFFRLFE (281 aa)). The tract at residues 374–522 (LTAQPSEQHA…LISPLLNDPS (149 aa)) is disordered. Residues 413–424 (KELKASTEDTGQ) show a composition bias toward basic and acidic residues. Residues 458 to 513 (RMQQNRPQSQQPSTAGSLTGSPHLSELSINSQGGPSVANMSLSPNLSPDAKQSSPL) show a composition bias toward polar residues. One can recognise a DH domain in the interval 541–732 (KAYFIAKEVA…TEMMAQLHGN (192 aa)). A PH 1 domain is found at 761 to 858 (EFIRLGSLSK…WIEDIQMAID (98 aa)). The tract at residues 864–907 (SDPVPELLASSPPDNKSPDETTVDQESEDDLSASRTSLERQSPH) is disordered. Positions 884–894 (TTVDQESEDDL) are enriched in acidic residues. The 98-residue stretch at 933 to 1030 (ENQLSGNLLR…WMEVIRSATS (98 aa)) folds into the PH 2 domain.

Interacts with PLXNA4. Detected in lateral motor column motor neurons and in preganglionic autonomic motor neurons of the column of Terni in the embryonic spinal cord (at protein level).

It localises to the cell membrane. The protein resides in the synapse. It is found in the synaptosome. Its subcellular location is the cytoplasm. The protein localises to the cytosol. It localises to the cell projection. The protein resides in the filopodium. It is found in the dendrite. Its subcellular location is the dendritic spine. Functions as a guanine nucleotide exchange factor for RAC1. Plays a role in semaphorin signaling via its interaction with PLXNA4. Plays a role in the assembly and disassembly of dendritic filopodia, the formation of dendritic spines, regulation of dendrite length and ultimately the formation of synapses. The polypeptide is FERM, ARHGEF and pleckstrin domain-containing protein 1 (FARP1) (Gallus gallus (Chicken)).